The chain runs to 374 residues: MARDYYDILGVSRDAGQEDLKQAYRRLARKYHPDVNKEAGAEERFKEINRAYEVLSDPETRARYDRFGEAGVSGAAAGYGDMGDMGGFADIFESIFSGFGGVGAGTSRRRTGPSRGDDLRFDLKLEFREAIFGGEKQIRITHLETCTTCNGSGAKPGTKPRTCGTCGGAGQVRRATRTPFGSFTQVSVCPTCNGKGQVIEDKCETCGGNGQAQVTKKLKITIPAGVDTGTRLRVSNEGDAGQQGGPAGDLYVYLFVQEDPEFRREGINILSEVKISYLQAILGSRLMVNTVDGEVELTIPPGTQPNTVLTLENHGVPRLGNPVSRGDHLITVLLEIPTRISAEERELLEKLAKIRGDRIGKGGIEGFFGKVFGG.

The region spanning 4–68 (DYYDILGVSR…ETRARYDRFG (65 aa)) is the J domain. The CR-type zinc finger occupies 133–215 (GGEKQIRITH…CGGNGQAQVT (83 aa)). 8 residues coordinate Zn(2+): cysteine 146, cysteine 149, cysteine 163, cysteine 166, cysteine 189, cysteine 192, cysteine 203, and cysteine 206. CXXCXGXG motif repeat units follow at residues 146 to 153 (CTTCNGSG), 163 to 170 (CGTCGGAG), 189 to 196 (CPTCNGKG), and 203 to 210 (CETCGGNG).

The protein belongs to the DnaJ family. As to quaternary structure, homodimer. Zn(2+) serves as cofactor.

It localises to the cytoplasm. Its function is as follows. Participates actively in the response to hyperosmotic and heat shock by preventing the aggregation of stress-denatured proteins and by disaggregating proteins, also in an autonomous, DnaK-independent fashion. Unfolded proteins bind initially to DnaJ; upon interaction with the DnaJ-bound protein, DnaK hydrolyzes its bound ATP, resulting in the formation of a stable complex. GrpE releases ADP from DnaK; ATP binding to DnaK triggers the release of the substrate protein, thus completing the reaction cycle. Several rounds of ATP-dependent interactions between DnaJ, DnaK and GrpE are required for fully efficient folding. Also involved, together with DnaK and GrpE, in the DNA replication of plasmids through activation of initiation proteins. This Cyanothece sp. (strain PCC 7425 / ATCC 29141) protein is Chaperone protein DnaJ.